Reading from the N-terminus, the 376-residue chain is Cytoplasmic tRNA 2-thiolation protein 2 (376 aa).

It belongs to the CTU2/NCS2 family.

It localises to the cytoplasm. It participates in tRNA modification; 5-methoxycarbonylmethyl-2-thiouridine-tRNA biosynthesis. Plays a central role in 2-thiolation of mcm(5)S(2)U at tRNA wobble positions of tRNA(Lys), tRNA(Glu) and tRNA(Gln). May act by forming a heterodimer with NCS6 that ligates sulfur from thiocarboxylated URM1 onto the uridine of tRNAs at wobble position. Prior mcm(5) tRNA modification by the elongator complex is required for 2-thiolation. May also be involved in protein urmylation. The chain is Cytoplasmic tRNA 2-thiolation protein 2 from Coccidioides immitis (strain RS) (Valley fever fungus).